A 394-amino-acid polypeptide reads, in one-letter code: MAAPSPGPREVLAPSPEAGCRAVTSSRRGLLWRLRDKQSRLGLFEISPGHELHGMTCMMQAGLWAATQVSMDHPPTGPPSRDDFSEVLTQVHEGFELGTLAGPAFAWLRRSLGLAEEDYQAALGPGGPYLQFLSTSKSKASFFLSHDQRFFLKTQGRREVQALLAHLPRYVQHLQRHPHSLLARLLGVHSLRVDRGKKTYFIVMQSVFYPAGRISERYDIKGCEVSRWVDPAPEGSPLVLVLKDLNFQGKTINLGPQRSWFLRQMELDTTFLRELNVLDYSLLIAFQRLHEDERGPGSSLIFRTARSVQGAQSPEESRAQNRRLLPDAPNALHILDGPEQRYFLGVVDLATVYGLRKRLEHLWKTLRYPGRTFSTVSPARYARRLCQWVEAHTE.

The PIPK domain occupies 36–393 (DKQSRLGLFE…RLCQWVEAHT (358 aa)).

As to quaternary structure, heterodimerizes with other type I phosphatidylinositol 4-phosphate 5-kinase.

The protein localises to the cytoplasm. Its subcellular location is the membrane. It catalyses the reaction a 1,2-diacyl-sn-glycero-3-phospho-(1D-myo-inositol 4-phosphate) + ATP = a 1,2-diacyl-sn-glycero-3-phospho-(1D-myo-inositol-4,5-bisphosphate) + ADP + H(+). Functionally, may act as a scaffold to localize and regulate type I PI(4)P 5-kinases to specific compartments within the cell, where they generate PI(4,5)P2 for actin nucleation, signaling and scaffold protein recruitment and conversion to PI(3,4,5)P3. This is Phosphatidylinositol 4-phosphate 5-kinase-like protein 1 (PIP5KL1) from Homo sapiens (Human).